The chain runs to 536 residues: Proto-oncogene tyrosine-protein kinase Yrk (536 aa).

Residue G2 is the site of N-myristoyl glycine attachment. S-palmitoyl cysteine attachment occurs at residues C3 and C6. The disordered stretch occupies residues 10–36 (ISGKGQGGSGTGTPAHPPSQYDPDPTQ). Residues 81-142 (GGVTLFIALY…PSNYVAPVDS (62 aa)) enclose the SH3 domain. One can recognise an SH2 domain in the interval 148-245 (WYFGKIGRKD…GLCCRLAVPC (98 aa)). The 254-residue stretch at 270–523 (LQLLQKLGNG…YLQSFLEDYF (254 aa)) folds into the Protein kinase domain. ATP contacts are provided by residues 276 to 284 (LGNGQFGEV) and K298. The Proton acceptor role is filled by D389. Position 419 is a phosphotyrosine; by autocatalysis (Y419). A Phosphotyrosine modification is found at Y530.

This sequence belongs to the protein kinase superfamily. Tyr protein kinase family. SRC subfamily. Phosphorylated. There are elevated levels of this protein in neural and hematopoietic tissues.

It catalyses the reaction L-tyrosyl-[protein] + ATP = O-phospho-L-tyrosyl-[protein] + ADP + H(+). May participate in signaling pathways. This Gallus gallus (Chicken) protein is Proto-oncogene tyrosine-protein kinase Yrk (YRK).